The sequence spans 147 residues: MGFRDICYRKHHKKLKQFQKVEIKVKMDCEGCERRVRKSVEGMKGVSKVTVDPKQSKLTVEGFVQPSKVVHRVMHRTGKKAELWPYVPYEVVPHPYAPGAYDKKAPPGYVRNALADPLVAPLARASSFEVKYTSAFSDDNPNACTIM.

The 65-residue stretch at 18–82 folds into the HMA domain; that stretch reads FQKVEIKVKM…VMHRTGKKAE (65 aa). Cys29 and Cys32 together coordinate a metal cation. At Cys144 the chain carries Cysteine methyl ester. Cys144 is lipidated: S-farnesyl cysteine. The propeptide at 145–147 is removed in mature form; the sequence is TIM.

It belongs to the HIPP family. As to quaternary structure, interacts with UBP16. Interacts with ZHD11/HB29.

Its subcellular location is the membrane. Heavy-metal-binding protein. Binds cadmium. May be involved in cadmium transport and play a role in cadmium detoxification. The polypeptide is Heavy metal-associated isoprenylated plant protein 27 (Arabidopsis thaliana (Mouse-ear cress)).